Consider the following 259-residue polypeptide: Hemin import ATP-binding protein HmuV (259 aa).

Positions 2–238 constitute an ABC transporter domain; sequence IEARDLNVSI…ALLSEVFDCQ (237 aa). 34 to 41 is a binding site for ATP; sequence GPNGSGKS.

The protein belongs to the ABC transporter superfamily. Heme (hemin) importer (TC 3.A.1.14.5) family. In terms of assembly, the complex is composed of two ATP-binding proteins (HmuV), two transmembrane proteins (HmuU) and a solute-binding protein (HmuT).

Its subcellular location is the cell inner membrane. In terms of biological role, part of the ABC transporter complex HmuTUV involved in hemin import. Responsible for energy coupling to the transport system. This Chelativorans sp. (strain BNC1) protein is Hemin import ATP-binding protein HmuV.